The sequence spans 317 residues: Beta-ketoacyl-[acyl-carrier-protein] synthase III (317 aa).

Catalysis depends on residues Cys112 and His244. The segment at 245–249 (QANLR) is ACP-binding. Residue Asn274 is part of the active site.

This sequence belongs to the thiolase-like superfamily. FabH family. Homodimer.

It is found in the cytoplasm. It catalyses the reaction malonyl-[ACP] + acetyl-CoA + H(+) = 3-oxobutanoyl-[ACP] + CO2 + CoA. The protein operates within lipid metabolism; fatty acid biosynthesis. In terms of biological role, catalyzes the condensation reaction of fatty acid synthesis by the addition to an acyl acceptor of two carbons from malonyl-ACP. Catalyzes the first condensation reaction which initiates fatty acid synthesis and may therefore play a role in governing the total rate of fatty acid production. Possesses both acetoacetyl-ACP synthase and acetyl transacylase activities. Its substrate specificity determines the biosynthesis of branched-chain and/or straight-chain of fatty acids. The sequence is that of Beta-ketoacyl-[acyl-carrier-protein] synthase III from Shigella dysenteriae serotype 1 (strain Sd197).